Here is a 481-residue protein sequence, read N- to C-terminus: UDP-N-acetylmuramate--L-alanine ligase (481 aa).

Residue 135–141 (GTHGKTT) coordinates ATP.

It belongs to the MurCDEF family.

The protein resides in the cytoplasm. The enzyme catalyses UDP-N-acetyl-alpha-D-muramate + L-alanine + ATP = UDP-N-acetyl-alpha-D-muramoyl-L-alanine + ADP + phosphate + H(+). Its pathway is cell wall biogenesis; peptidoglycan biosynthesis. In terms of biological role, cell wall formation. The polypeptide is UDP-N-acetylmuramate--L-alanine ligase (Nostoc punctiforme (strain ATCC 29133 / PCC 73102)).